We begin with the raw amino-acid sequence, 70 residues long: Mu-agatoxin-Ao1a (70 aa).

Residues 1–20 form the signal peptide; that stretch reads MKAIIFFCFLSVMVFIVAEA. A propeptide spanning residues 21–33 is cleaved from the precursor; the sequence is SSLEALKIFEGER. Intrachain disulfides connect cysteine 35/cysteine 50, cysteine 42/cysteine 55, cysteine 49/cysteine 65, and cysteine 57/cysteine 63. Asparagine 69 carries the asparagine amide modification.

The protein belongs to the neurotoxin 07 (Beta/delta-agtx) family. 04 (aga-5) subfamily. In terms of tissue distribution, expressed by the venom gland.

It is found in the secreted. Insecticidal neurotoxin that modulates the insect Nav channel (DmNaV1/tipE (para/tipE)) in a unique manner, with both the activation and inactivation processes being affected. The voltage dependence of activation is shifted toward more hyperpolarized potentials (analogous to site 4 toxins) and a non-inactivating persistent sodium current is induced (site 3-like action). Interestingly, both effects take place in a voltage-dependent manner, producing a bell-shaped curve between -80 and 0 mV. The sequence is that of Mu-agatoxin-Ao1a from Agelena orientalis (Funnel-web spider).